A 368-amino-acid chain; its full sequence is Flagellar P-ring protein (368 aa).

The N-terminal stretch at 1–24 (MTLTRPLALISALAALILALPADA) is a signal peptide.

This sequence belongs to the FlgI family. As to quaternary structure, the basal body constitutes a major portion of the flagellar organelle and consists of four rings (L,P,S, and M) mounted on a central rod.

It localises to the periplasm. The protein localises to the bacterial flagellum basal body. Assembles around the rod to form the L-ring and probably protects the motor/basal body from shearing forces during rotation. The polypeptide is Flagellar P-ring protein (Methylobacillus flagellatus (strain ATCC 51484 / DSM 6875 / VKM B-1610 / KT)).